The following is a 146-amino-acid chain: Protein archease (146 aa).

Ca(2+) is bound by residues D16, D145, and I146.

Belongs to the archease family.

Functionally, activates the tRNA-splicing ligase complex by facilitating the enzymatic turnover of catalytic subunit RtcB. Acts by promoting the guanylylation of RtcB, a key intermediate step in tRNA ligation. Can also alter the NTP specificity of RtcB such that ATP, dGTP or ITP is used efficiently. This chain is Protein archease, found in Methanosarcina mazei (strain ATCC BAA-159 / DSM 3647 / Goe1 / Go1 / JCM 11833 / OCM 88) (Methanosarcina frisia).